We begin with the raw amino-acid sequence, 357 residues long: NmrA-like family domain-containing oxidoreductase notA' (357 aa).

NADP(+) contacts are provided by residues Gly13 to Gln18, Arg39 to Ser43, Asp60 to Gly61, Thr81 to Ser83, Lys140, and Tyr164 to Val167.

It belongs to the NmrA-type oxidoreductase family.

In terms of biological role, nmrA-like family domain-containing oxidoreductase; part of the gene cluster that mediates the biosynthesis of notoamide, a fungal indole alkaloid that belongs to a family of natural products containing a characteristic bicyclo[2.2.2]diazaoctane core. The first step of notoamide biosynthesis involves coupling of L-proline and L-tryptophan by the bimodular NRPS notE', to produce cyclo-L-tryptophan-L-proline called brevianamide F. The reverse prenyltransferase notF' then acts as a deoxybrevianamide E synthase and converts brevianamide F to deoxybrevianamide E via reverse prenylation at C-2 of the indole ring leading to the bicyclo[2.2.2]diazaoctane core. Deoxybrevianamide E is further hydroxylated at C-6 of the indole ring, likely catalyzed by the cytochrome P450 monooxygenase notG', to yield 6-hydroxy-deoxybrevianamide E. 6-hydroxy-deoxybrevianamide E is a specific substrate of the prenyltransferase notC' for normal prenylation at C-7 to produce 6-hydroxy-7-prenyl-deoxybrevianamide, also called notoamide S. As the proposed pivotal branching point in notoamide biosynthesis, notoamide S can be diverted to notoamide E through an oxidative pyran ring closure putatively catalyzed by either notH' cytochrome P450 monooxygenase or the notD' FAD-linked oxidoreductase. This step would be followed by an indole 2,3-epoxidation-initiated pinacol-like rearrangement catalyzed by the notB' FAD-dependent monooxygenase leading to the formation of notoamide C and notoamide D. On the other hand notoamide S is converted to notoamide T by notH' (or notD'), a bifunctional oxidase that also functions as the intramolecular Diels-Alderase responsible for generation of (-)-notoamide T. To generate antipodal (+)-notoaminide T, notH (or notD) in Aspergillus strain MF297-2 is expected to catalyze a Diels-Alder reaction leading to the opposite stereochemistry. The remaining oxidoreductase notD' (or notH') likely catalyzes the oxidative pyran ring formation to yield (-)-stephacidin A. The FAD-dependent monooxygenase notI' is highly similar to notB' and is predicted to catalyze a similar conversion from (-)-stephacidin A to (+)-notoamide B via the 2,3-epoxidation of (-)-stephacidin A followed by a pinacol-type rearrangement. Finally, it remains unclear which enzyme could be responsible for the final hydroxylation steps leading to notoamide A and sclerotiamide. The chain is NmrA-like family domain-containing oxidoreductase notA' from Aspergillus versicolor.